The sequence spans 429 residues: Putative F-box/kelch-repeat protein At2g21680 (429 aa).

A disordered region spans residues 1–32 (MVLISETSDDGSTGGDHQIKKPKKEEDRNKKL). Residues 17-29 (HQIKKPKKEEDRN) show a composition bias toward basic and acidic residues. Residues 37-84 (QVSLPIPEELILRCFLLVRRCHHPSLSLVCRSFHSLMSKLYDDRLRLG) enclose the F-box domain. Kelch repeat units follow at residues 144–175 (DIYV…RRGE), 176–221 (TSIR…VIDG), 222–267 (KIYV…LTYA), 269–313 (MKEK…VVDN), and 315–359 (LFCI…DGYK).

This is Putative F-box/kelch-repeat protein At2g21680 from Arabidopsis thaliana (Mouse-ear cress).